The primary structure comprises 367 residues: tRNA/tmRNA (uracil-C(5))-methyltransferase (367 aa).

S-adenosyl-L-methionine is bound by residues Q190, Y218, N223, E239, and D299. C324 functions as the Nucleophile in the catalytic mechanism. The active-site Proton acceptor is E358.

The protein belongs to the class I-like SAM-binding methyltransferase superfamily. RNA M5U methyltransferase family. TrmA subfamily.

It carries out the reaction uridine(54) in tRNA + S-adenosyl-L-methionine = 5-methyluridine(54) in tRNA + S-adenosyl-L-homocysteine + H(+). The catalysed reaction is uridine(341) in tmRNA + S-adenosyl-L-methionine = 5-methyluridine(341) in tmRNA + S-adenosyl-L-homocysteine + H(+). In terms of biological role, dual-specificity methyltransferase that catalyzes the formation of 5-methyluridine at position 54 (m5U54) in all tRNAs, and that of position 341 (m5U341) in tmRNA (transfer-mRNA). This Pectobacterium atrosepticum (strain SCRI 1043 / ATCC BAA-672) (Erwinia carotovora subsp. atroseptica) protein is tRNA/tmRNA (uracil-C(5))-methyltransferase.